A 108-amino-acid chain; its full sequence is Transcriptional activator HlyU (108 aa).

Positions 13–107 (EMEKNSAKAV…LLHRLYCQAN (95 aa)) constitute an HTH arsR-type domain. The H-T-H motif DNA-binding region spans 47–66 (VGELSSRLELSQSALSQHLA).

Functionally, up-regulates the expression of the hemolysin gene, hlyA, and may promote expression of other virulence determinants in vivo. It may have both positive and negative regulator activities. The sequence is that of Transcriptional activator HlyU (hlyU) from Vibrio cholerae serotype O1 (strain ATCC 39315 / El Tor Inaba N16961).